Reading from the N-terminus, the 133-residue chain is Nucleoside diphosphate kinase (133 aa).

6 residues coordinate ATP: Lys-9, Phe-57, Arg-85, Thr-91, Arg-102, and Asn-112. The Pros-phosphohistidine intermediate role is filled by His-115.

It belongs to the NDK family. The cofactor is Mg(2+).

It localises to the cytoplasm. The enzyme catalyses a 2'-deoxyribonucleoside 5'-diphosphate + ATP = a 2'-deoxyribonucleoside 5'-triphosphate + ADP. The catalysed reaction is a ribonucleoside 5'-diphosphate + ATP = a ribonucleoside 5'-triphosphate + ADP. In terms of biological role, major role in the synthesis of nucleoside triphosphates other than ATP. The ATP gamma phosphate is transferred to the NDP beta phosphate via a ping-pong mechanism, using a phosphorylated active-site intermediate. This chain is Nucleoside diphosphate kinase, found in Methanococcus maripaludis (strain DSM 14266 / JCM 13030 / NBRC 101832 / S2 / LL).